Here is a 146-residue protein sequence, read N- to C-terminus: Small ribosomal subunit protein bS16 (146 aa).

The interval 119–146 (GSENKGGKSKKAEEKSAEKTAEKSEGEA) is disordered. Residues 128–146 (KKAEEKSAEKTAEKSEGEA) are compositionally biased toward basic and acidic residues.

It belongs to the bacterial ribosomal protein bS16 family.

In Thermobifida fusca (strain YX), this protein is Small ribosomal subunit protein bS16.